The primary structure comprises 337 residues: S-adenosylmethionine:tRNA ribosyltransferase-isomerase (337 aa).

This sequence belongs to the QueA family. In terms of assembly, monomer.

The protein resides in the cytoplasm. The enzyme catalyses 7-aminomethyl-7-carbaguanosine(34) in tRNA + S-adenosyl-L-methionine = epoxyqueuosine(34) in tRNA + adenine + L-methionine + 2 H(+). It participates in tRNA modification; tRNA-queuosine biosynthesis. Transfers and isomerizes the ribose moiety from AdoMet to the 7-aminomethyl group of 7-deazaguanine (preQ1-tRNA) to give epoxyqueuosine (oQ-tRNA). The protein is S-adenosylmethionine:tRNA ribosyltransferase-isomerase of Legionella pneumophila (strain Corby).